The chain runs to 245 residues: tRNA1(Val) (adenine(37)-N6)-methyltransferase (245 aa).

Belongs to the methyltransferase superfamily. tRNA (adenine-N(6)-)-methyltransferase family.

It is found in the cytoplasm. The enzyme catalyses adenosine(37) in tRNA1(Val) + S-adenosyl-L-methionine = N(6)-methyladenosine(37) in tRNA1(Val) + S-adenosyl-L-homocysteine + H(+). Specifically methylates the adenine in position 37 of tRNA(1)(Val) (anticodon cmo5UAC). The polypeptide is tRNA1(Val) (adenine(37)-N6)-methyltransferase (Escherichia coli O139:H28 (strain E24377A / ETEC)).